The following is a 362-amino-acid chain: UDP-N-acetylglucosamine--N-acetylmuramyl-(pentapeptide) pyrophosphoryl-undecaprenol N-acetylglucosamine transferase (362 aa).

UDP-N-acetyl-alpha-D-glucosamine contacts are provided by residues 15 to 17 (TGG), Asn-127, Arg-165, Ser-191, Ile-247, 266 to 271 (ALTVSE), and Gln-292.

This sequence belongs to the glycosyltransferase 28 family. MurG subfamily.

The protein localises to the cell inner membrane. It catalyses the reaction di-trans,octa-cis-undecaprenyl diphospho-N-acetyl-alpha-D-muramoyl-L-alanyl-D-glutamyl-meso-2,6-diaminopimeloyl-D-alanyl-D-alanine + UDP-N-acetyl-alpha-D-glucosamine = di-trans,octa-cis-undecaprenyl diphospho-[N-acetyl-alpha-D-glucosaminyl-(1-&gt;4)]-N-acetyl-alpha-D-muramoyl-L-alanyl-D-glutamyl-meso-2,6-diaminopimeloyl-D-alanyl-D-alanine + UDP + H(+). It participates in cell wall biogenesis; peptidoglycan biosynthesis. Cell wall formation. Catalyzes the transfer of a GlcNAc subunit on undecaprenyl-pyrophosphoryl-MurNAc-pentapeptide (lipid intermediate I) to form undecaprenyl-pyrophosphoryl-MurNAc-(pentapeptide)GlcNAc (lipid intermediate II). In Shewanella putrefaciens (strain CN-32 / ATCC BAA-453), this protein is UDP-N-acetylglucosamine--N-acetylmuramyl-(pentapeptide) pyrophosphoryl-undecaprenol N-acetylglucosamine transferase.